Reading from the N-terminus, the 152-residue chain is Aspartate carbamoyltransferase regulatory chain (152 aa).

4 residues coordinate Zn(2+): cysteine 108, cysteine 113, cysteine 136, and cysteine 139.

The protein belongs to the PyrI family. In terms of assembly, contains catalytic and regulatory chains. The cofactor is Zn(2+).

In terms of biological role, involved in allosteric regulation of aspartate carbamoyltransferase. The protein is Aspartate carbamoyltransferase regulatory chain of Thermococcus kodakarensis (strain ATCC BAA-918 / JCM 12380 / KOD1) (Pyrococcus kodakaraensis (strain KOD1)).